Here is a 428-residue protein sequence, read N- to C-terminus: Large envelope protein (428 aa).

Residue Gly-2 is the site of N-myristoyl glycine; by host attachment. Residues 2 to 145 form a pre-S1 region; sequence GNNIKVTFDP…PPLRDTHPHL (144 aa). A pre-S region spans residues 2 to 204; it reads GNNIKVTFDP…PLTIGDPVLS (203 aa). Over 2-211 the chain is Virion surface; in external conformation; the sequence is GNNIKVTFDP…VLSTEMSPSG (210 aa). The Intravirion; in internal conformation portion of the chain corresponds to 2 to 283; it reads GNNIKVTFDP…NGFRWMYLRR (282 aa). The N-linked (GlcNAc...) asparagine glycan is linked to Asn-3. The tract at residues 110 to 144 is disordered; the sequence is RDIPRGIVPPQTPSNRDQRRKPTPLTPPLRDTHPH. The interval 146 to 204 is pre-S2; sequence TMKNQTGHLQGFAEGLRALTTSDHHNSAYGDPFTTLSPVVPTVSTTLSPPLTIGDPVLS. The chain crosses the membrane as a helical span at residues 212-232; sequence LLGLLAGLQVVYFLWTKILTI. At 233–283 the chain is on the intravirion; in external conformation side; it reads AQSLDWWWTSLSFPGGIPECTGQNLQFQTCKHLPTSCPPTCNGFRWMYLRR. Residues 284-304 traverse the membrane as a helical segment; it reads FIIYLLVLLLFLTFLLVLLDW. At 305 to 376 the chain is on the virion surface side; the sequence is KGLLPVCPMM…WALARFSWLS (72 aa). The N-linked (GlcNAc...) asparagine; by host glycan is linked to Asn-348. Residues 377–397 traverse the membrane as a helical segment; sequence LLVPLLQWLGGISLTVWLLLI. The Intravirion segment spans residues 398–403; it reads WMIWFW. The helical transmembrane segment at 404–426 threads the bilayer; it reads GPVLMSILPPFIPIFALFFLIWA. The Virion surface portion of the chain corresponds to 427-428; that stretch reads YI.

It belongs to the orthohepadnavirus major surface antigen family. In its internal form (Li-HBsAg), interacts with the capsid protein and with the isoform S. Interacts with host chaperone CANX. As to quaternary structure, associates with host chaperone CANX through its pre-S2 N glycan; this association may be essential for isoform M proper secretion. In terms of assembly, interacts with isoform L. Interacts with the antigens of satellite virus HDV (HDVAgs); this interaction is required for encapsidation of HDV genomic RNA. In terms of processing, isoform M is N-terminally acetylated by host at a ratio of 90%, and N-glycosylated by host at the pre-S2 region. Post-translationally, myristoylated.

Its subcellular location is the virion membrane. In terms of biological role, the large envelope protein exists in two topological conformations, one which is termed 'external' or Le-HBsAg and the other 'internal' or Li-HBsAg. In its external conformation the protein attaches the virus to cell receptors and thereby initiating infection. This interaction determines the species specificity and liver tropism. This attachment induces virion internalization predominantly through caveolin-mediated endocytosis. The large envelope protein also assures fusion between virion membrane and endosomal membrane. In its internal conformation the protein plays a role in virion morphogenesis and mediates the contact with the nucleocapsid like a matrix protein. Functionally, the middle envelope protein plays an important role in the budding of the virion. It is involved in the induction of budding in a nucleocapsid independent way. In this process the majority of envelope proteins bud to form subviral lipoprotein particles of 22 nm of diameter that do not contain a nucleocapsid. This Ground squirrel hepatitis virus (strain 27) (GSHV) protein is Large envelope protein.